A 673-amino-acid polypeptide reads, in one-letter code: Annexin A6 (673 aa).

A2 carries the N-acetylalanine modification. A Phosphoserine modification is found at S13. Annexin repeat units follow at residues 20 to 91, 92 to 163, 175 to 247, 251 to 322, 363 to 434, 435 to 506, 521 to 595, and 599 to 670; these read FDAN…NLMR, PLAY…VLLQ, DLVQ…AVVK, STPE…KLCG, FNPD…GLMM, PPAH…SLAT, EDAQ…AIVQ, and NKPL…ALCG. Y30 bears the Phosphotyrosine mark. K63, K68, K75, and K81 each carry N6-acetyllysine. Y201 carries the post-translational modification Phosphotyrosine. N6-acetyllysine is present on residues K306, K370, and K418. S422 is modified (phosphoserine). K483 bears the N6-acetyllysine mark. S537 bears the Phosphoserine mark. At K620 the chain carries N6-acetyllysine.

Belongs to the annexin family.

The protein localises to the cytoplasm. It localises to the melanosome. In terms of biological role, may associate with CD21. May regulate the release of Ca(2+) from intracellular stores. The chain is Annexin A6 (Anxa6) from Mus musculus (Mouse).